Reading from the N-terminus, the 343-residue chain is L-threonine 3-dehydrogenase (343 aa).

Cys-38 serves as a coordination point for Zn(2+). Residues Thr-40 and His-43 each act as charge relay system in the active site. The Zn(2+) site is built by His-63, Glu-64, Cys-93, Cys-96, Cys-99, and Cys-107. NAD(+)-binding positions include Ile-176, Asp-196, Arg-201, 261–263, and 286–288; these read LGI and IAG.

The protein belongs to the zinc-containing alcohol dehydrogenase family. As to quaternary structure, homotetramer. Requires Zn(2+) as cofactor.

The protein localises to the cytoplasm. It carries out the reaction L-threonine + NAD(+) = (2S)-2-amino-3-oxobutanoate + NADH + H(+). The protein operates within amino-acid degradation; L-threonine degradation via oxydo-reductase pathway; glycine from L-threonine: step 1/2. Catalyzes the NAD(+)-dependent oxidation of L-threonine to 2-amino-3-ketobutyrate. In Thermus thermophilus (strain ATCC 27634 / DSM 579 / HB8), this protein is L-threonine 3-dehydrogenase.